The sequence spans 397 residues: CCA-adding enzyme (397 aa).

2 residues coordinate ATP: G26 and R29. CTP is bound by residues G26 and R29. D39 and D41 together coordinate Mg(2+). ATP contacts are provided by R110, D153, R156, R159, and R162. The CTP site is built by R110, D153, R156, R159, and R162.

The protein belongs to the tRNA nucleotidyltransferase/poly(A) polymerase family. Bacterial CCA-adding enzyme type 3 subfamily. In terms of assembly, homodimer. Mg(2+) serves as cofactor.

The enzyme catalyses a tRNA precursor + 2 CTP + ATP = a tRNA with a 3' CCA end + 3 diphosphate. It carries out the reaction a tRNA with a 3' CCA end + 2 CTP + ATP = a tRNA with a 3' CCACCA end + 3 diphosphate. Functionally, catalyzes the addition and repair of the essential 3'-terminal CCA sequence in tRNAs without using a nucleic acid template. Adds these three nucleotides in the order of C, C, and A to the tRNA nucleotide-73, using CTP and ATP as substrates and producing inorganic pyrophosphate. tRNA 3'-terminal CCA addition is required both for tRNA processing and repair. Also involved in tRNA surveillance by mediating tandem CCA addition to generate a CCACCA at the 3' terminus of unstable tRNAs. While stable tRNAs receive only 3'-terminal CCA, unstable tRNAs are marked with CCACCA and rapidly degraded. The polypeptide is CCA-adding enzyme (Bacillus cereus (strain ZK / E33L)).